The primary structure comprises 309 residues: HPr kinase/phosphorylase (309 aa).

Active-site residues include His-139 and Lys-160. Position 154–161 (154–161 (GESGIGKS)) interacts with ATP. Position 161 (Ser-161) interacts with Mg(2+). The active-site Proton acceptor; for phosphorylation activity. Proton donor; for dephosphorylation activity is the Asp-178. An important for the catalytic mechanism of both phosphorylation and dephosphorylation region spans residues 202–211 (IELRGIGIID). Glu-203 is a binding site for Mg(2+). The active site involves Arg-244. The interval 265–270 (PIRPGR) is important for the catalytic mechanism of dephosphorylation.

It belongs to the HPrK/P family. In terms of assembly, homohexamer. Mg(2+) is required as a cofactor.

It catalyses the reaction [HPr protein]-L-serine + ATP = [HPr protein]-O-phospho-L-serine + ADP + H(+). The enzyme catalyses [HPr protein]-O-phospho-L-serine + phosphate + H(+) = [HPr protein]-L-serine + diphosphate. In terms of biological role, catalyzes the ATP- as well as the pyrophosphate-dependent phosphorylation of a specific serine residue in HPr, a phosphocarrier protein of the phosphoenolpyruvate-dependent sugar phosphotransferase system (PTS). HprK/P also catalyzes the pyrophosphate-producing, inorganic phosphate-dependent dephosphorylation (phosphorolysis) of seryl-phosphorylated HPr (P-Ser-HPr). The two antagonistic activities of HprK/P are regulated by several intracellular metabolites, which change their concentration in response to the absence or presence of rapidly metabolisable carbon sources (glucose, fructose, etc.) in the growth medium. Therefore, by controlling the phosphorylation state of HPr, HPrK/P is a sensor enzyme that plays a major role in the regulation of carbon metabolism and sugar transport: it mediates carbon catabolite repression (CCR), and regulates PTS-catalyzed carbohydrate uptake and inducer exclusion. The sequence is that of HPr kinase/phosphorylase from Lachnoclostridium phytofermentans (strain ATCC 700394 / DSM 18823 / ISDg) (Clostridium phytofermentans).